The primary structure comprises 120 residues: Large ribosomal subunit protein uL18 (120 aa).

The protein belongs to the universal ribosomal protein uL18 family. As to quaternary structure, part of the 50S ribosomal subunit; part of the 5S rRNA/L5/L18/L25 subcomplex. Contacts the 5S and 23S rRNAs.

In terms of biological role, this is one of the proteins that bind and probably mediate the attachment of the 5S RNA into the large ribosomal subunit, where it forms part of the central protuberance. This Halalkalibacterium halodurans (strain ATCC BAA-125 / DSM 18197 / FERM 7344 / JCM 9153 / C-125) (Bacillus halodurans) protein is Large ribosomal subunit protein uL18.